A 298-amino-acid chain; its full sequence is Acetylglutamate kinase (298 aa).

Substrate-binding positions include 69–70, Arg91, and Asn196; that span reads GG.

It belongs to the acetylglutamate kinase family. ArgB subfamily.

The protein localises to the cytoplasm. It catalyses the reaction N-acetyl-L-glutamate + ATP = N-acetyl-L-glutamyl 5-phosphate + ADP. It participates in amino-acid biosynthesis; L-arginine biosynthesis; N(2)-acetyl-L-ornithine from L-glutamate: step 2/4. Its function is as follows. Catalyzes the ATP-dependent phosphorylation of N-acetyl-L-glutamate. This is Acetylglutamate kinase from Nitrobacter hamburgensis (strain DSM 10229 / NCIMB 13809 / X14).